The following is a 220-amino-acid chain: Phosphatidylserine decarboxylase proenzyme (220 aa).

Catalysis depends on S188, which acts as the Schiff-base intermediate with substrate; via pyruvic acid. S188 carries the post-translational modification Pyruvic acid (Ser); by autocatalysis.

This sequence belongs to the phosphatidylserine decarboxylase family. PSD-A subfamily. As to quaternary structure, heterodimer of a large membrane-associated beta subunit and a small pyruvoyl-containing alpha subunit. The cofactor is pyruvate. Post-translationally, is synthesized initially as an inactive proenzyme. Formation of the active enzyme involves a self-maturation process in which the active site pyruvoyl group is generated from an internal serine residue via an autocatalytic post-translational modification. Two non-identical subunits are generated from the proenzyme in this reaction, and the pyruvate is formed at the N-terminus of the alpha chain, which is derived from the carboxyl end of the proenzyme. The post-translation cleavage follows an unusual pathway, termed non-hydrolytic serinolysis, in which the side chain hydroxyl group of the serine supplies its oxygen atom to form the C-terminus of the beta chain, while the remainder of the serine residue undergoes an oxidative deamination to produce ammonia and the pyruvoyl prosthetic group on the alpha chain.

The protein resides in the cell membrane. The catalysed reaction is a 1,2-diacyl-sn-glycero-3-phospho-L-serine + H(+) = a 1,2-diacyl-sn-glycero-3-phosphoethanolamine + CO2. It participates in phospholipid metabolism; phosphatidylethanolamine biosynthesis; phosphatidylethanolamine from CDP-diacylglycerol: step 2/2. Its function is as follows. Catalyzes the formation of phosphatidylethanolamine (PtdEtn) from phosphatidylserine (PtdSer). The polypeptide is Phosphatidylserine decarboxylase proenzyme (Cytophaga hutchinsonii (strain ATCC 33406 / DSM 1761 / CIP 103989 / NBRC 15051 / NCIMB 9469 / D465)).